Reading from the N-terminus, the 416-residue chain is MLYLEDYLEMIEQLPMDLRDRFTEMREMDLQVQNAMDQLEQRVGEFFMNAKKNKPEWREEQMASIKKDYFKALEDADEKVQLANQIYDLVDRHLRKLDQELAKFKMELEADNAGITEILERRSLELDTPSQPVNNHHVHSHSSGEKRKHIPSSHHSTTDHVPEKKFKSEALLSTLTSDASKENTAGCRTNLSSSSTNNVYNVNSSQPLTSYNISSLSTGAAAGAITMAAAQAVQATAQMKEGRRTSSLKASYEAFKNTDLLGISLSRDSASYSSSALASTLTQTLTSSATTDSRSGRKSKSNNKSASQQSSSSSSSSSLSSCSSSSALAHELSHQQTAAIPESDTNSQVDWTYDPNEPRYCICNQVSYGEMVGCDNQDCPIEWFHYGCVGLSEAPKGKWYCPQCTAAMKRRGSRHK.

3 disordered regions span residues 126–165 (LDTP…PEKK), 177–198 (SDAS…STNN), and 283–319 (QTLT…SSSL). A compositionally biased stretch (basic residues) spans 136-152 (HHVHSHSSGEKRKHIPS). The segment covering 156-165 (STTDHVPEKK) has biased composition (basic and acidic residues). Positions 177–187 (SDASKENTAGC) are enriched in polar residues. 3 stretches are compositionally biased toward low complexity: residues 189 to 198 (TNLSSSSTNN), 283 to 293 (QTLTSSATTDS), and 302 to 319 (NNKS…SSSL). A PHD-type zinc finger spans residues 358-407 (PRYCICNQVSYGEMVGCDNQDCPIEWFHYGCVGLSEAPKGKWYCPQCTAA). Positions 361, 363, 374, 379, 385, 388, 401, and 404 each coordinate Zn(2+).

It belongs to the ING family. As to quaternary structure, interacts with H3K4me3 and to a lesser extent with H3K4me2. Component of the NuA4 histone acetyltransferase complex.

The protein localises to the nucleus. Functionally, component of the NuA4 histone acetyltransferase (HAT) complex which is involved in transcriptional activation of select genes principally by acetylation of nucleosomal histone H4 and H2A. This modification may both alter nucleosome - DNA interactions and promote interaction of the modified histones with other proteins which positively regulate transcription. NuA4 may also play a direct role in DNA repair when directly recruited to sites of DNA damage. The sequence is that of Inhibitor of growth protein 3 (ing3) from Xenopus laevis (African clawed frog).